The following is a 357-amino-acid chain: Guanine nucleotide-binding protein alpha-1 subunit (357 aa).

Gly2 carries the N-myristoyl glycine lipid modification. The S-palmitoyl cysteine moiety is linked to residue Cys4. The 326-residue stretch at 32 to 357 (NVIKLLLLGA…SSKLKGCGLF (326 aa)) folds into the G-alpha domain. A G1 motif region spans residues 35–48 (KLLLLGAGESGKST). Residues Glu43, Ser44, Gly45, Lys46, Ser47, Thr48, Asp151, Leu176, Thr182, Gly204, Asn270, Lys271, Asp273, and Ala329 each coordinate GTP. Ser47 is a Mg(2+) binding site. The interval 174-182 (DILHTRVPT) is G2 motif. Position 182 (Thr182) interacts with Mg(2+). The segment at 197–206 (FRVFDVGGQR) is G3 motif. The interval 266–273 (ILFLNKVD) is G4 motif. Residues 327 to 332 (TCATDT) are G5 motif.

It belongs to the G-alpha family. G(q) subfamily. In terms of assembly, g proteins are composed of 3 units; alpha, beta and gamma. The alpha chain contains the guanine nucleotide binding site. Requires Mg(2+) as cofactor.

Its function is as follows. Guanine nucleotide-binding proteins (G proteins) are involved as modulators or transducers in various transmembrane signaling systems. This Caenorhabditis briggsae protein is Guanine nucleotide-binding protein alpha-1 subunit (gpa-1).